The chain runs to 151 residues: Ribosome maturation factor RimP (151 aa).

It belongs to the RimP family.

Its subcellular location is the cytoplasm. Its function is as follows. Required for maturation of 30S ribosomal subunits. This is Ribosome maturation factor RimP from Haemophilus influenzae (strain PittGG).